A 269-amino-acid polypeptide reads, in one-letter code: Acyl-CoA-binding domain-containing protein 4 (269 aa).

Positions 12-101 (CQKQFQAAVS…MKLVAQKVID (90 aa)) constitute an ACB domain. Residues 23 to 32 (IQNLPKNGSY), 43 to 47 (YSYYK), Lys69, and Tyr88 each bind an acyl-CoA. Disordered regions lie at residues 150 to 175 (GAVSEPPCLPKEPAPPSPESHSPRDL), 195 to 226 (EQRAASGEKRDPRNSPVPPTEKEAAAQAQCSA), and 248 to 269 (VALPNVSDPKEVTVSGGVSAAN). Residues 156-167 (PCLPKEPAPPSP) show a composition bias toward pro residues. 2 positions are modified to phosphoserine: Ser166 and Ser171.

Its function is as follows. Binds medium- and long-chain acyl-CoA esters and may function as an intracellular carrier of acyl-CoA esters. The sequence is that of Acyl-CoA-binding domain-containing protein 4 (ACBD4) from Pongo abelii (Sumatran orangutan).